A 443-amino-acid polypeptide reads, in one-letter code: ATP-dependent protease ATPase subunit HslU (443 aa).

Residues Ile-18, 60-65 (GVGKTE), Asp-256, Glu-321, and Arg-393 contribute to the ATP site.

The protein belongs to the ClpX chaperone family. HslU subfamily. A double ring-shaped homohexamer of HslV is capped on each side by a ring-shaped HslU homohexamer. The assembly of the HslU/HslV complex is dependent on binding of ATP.

It localises to the cytoplasm. ATPase subunit of a proteasome-like degradation complex; this subunit has chaperone activity. The binding of ATP and its subsequent hydrolysis by HslU are essential for unfolding of protein substrates subsequently hydrolyzed by HslV. HslU recognizes the N-terminal part of its protein substrates and unfolds these before they are guided to HslV for hydrolysis. The polypeptide is ATP-dependent protease ATPase subunit HslU (Vibrio cholerae serotype O1 (strain ATCC 39541 / Classical Ogawa 395 / O395)).